The chain runs to 179 residues: ATP-dependent protease subunit HslV (179 aa).

Thr5 is a catalytic residue. Residues Cys164 and Thr167 each coordinate Na(+).

The protein belongs to the peptidase T1B family. HslV subfamily. In terms of assembly, a double ring-shaped homohexamer of HslV is capped on each side by a ring-shaped HslU homohexamer. The assembly of the HslU/HslV complex is dependent on binding of ATP.

The protein resides in the cytoplasm. It carries out the reaction ATP-dependent cleavage of peptide bonds with broad specificity.. Its activity is regulated as follows. Allosterically activated by HslU binding. Its function is as follows. Protease subunit of a proteasome-like degradation complex believed to be a general protein degrading machinery. The chain is ATP-dependent protease subunit HslV from Carboxydothermus hydrogenoformans (strain ATCC BAA-161 / DSM 6008 / Z-2901).